Here is a 134-residue protein sequence, read N- to C-terminus: UPF0357 protein YCL012C (134 aa).

Positions 1–23 are cleaved as a signal peptide; that stretch reads MKSLFYLKLLLWVVLLSLCLLMA. 2 positions are modified to phosphoserine: serine 71 and serine 74. Lysine 86 is covalently cross-linked (Glycyl lysine isopeptide (Lys-Gly) (interchain with G-Cter in ubiquitin)).

This sequence belongs to the UPF0357 family.

This is UPF0357 protein YCL012C from Saccharomyces cerevisiae (strain ATCC 204508 / S288c) (Baker's yeast).